The sequence spans 237 residues: MLLLISPINHEEALESIKGGADIVDVKNPKEGSLGANFPWVIRDIREITPEDKLVSATLGDVPYKPGTVSLAAMGAHVSGADYIKVGLYGTKDYDEAVEVMENVAKTIKDVDNDTIVVASGYADAHRVGAVDPMEIPKVAKDAGCDLAMLDTAVKDGHTLFDYLSIEDLEKFVNEAHSYGLKTALAGSVKKEQLKPLNDIGCDVVGIRGAACVGGDRNTGKIHHTAVAELKELCDSF.

Catalysis depends on lysine 27, which acts as the Schiff-base intermediate with substrate. The active-site Proton acceptor is the lysine 85.

This sequence belongs to the MfnB family.

It catalyses the reaction 2 D-glyceraldehyde 3-phosphate = 4-(hydroxymethyl)-2-furancarboxaldehyde phosphate + phosphate + 2 H2O. The protein operates within cofactor biosynthesis; methanofuran biosynthesis. In terms of biological role, catalyzes the formation of 4-(hydroxymethyl)-2-furancarboxaldehyde phosphate (4-HFC-P) from two molecules of glyceraldehyde-3-P (GA-3-P). This is (5-formylfuran-3-yl)methyl phosphate synthase from Methanobrevibacter smithii (strain ATCC 35061 / DSM 861 / OCM 144 / PS).